We begin with the raw amino-acid sequence, 114 residues long: Protein LLP homolog (114 aa).

2 stretches are compositionally biased toward basic residues: residues 1–21 and 91–108; these read MAKSLRSKWKRKMRAEKRKKN and QRKKLKAQRLKGKKKSKL. 2 disordered regions span residues 1–23 and 91–114; these read MAKSLRSKWKRKMRAEKRKKNAP and QRKKLKAQRLKGKKKSKLPKGLAW.

The protein belongs to the learning-associated protein family.

It is found in the nucleus. The protein resides in the nucleolus. It localises to the chromosome. Functionally, regulates dendritic and spine growth and synaptic transmission. In Gallus gallus (Chicken), this protein is Protein LLP homolog (LLPH).